A 129-amino-acid chain; its full sequence is Small ribosomal subunit protein uS13 (129 aa).

Residues 96-129 are disordered; it reads GLPVRGQRTSTNARTRKGPRKTVGVSKAAAAAKA.

This sequence belongs to the universal ribosomal protein uS13 family. As to quaternary structure, part of the 30S ribosomal subunit. Forms a loose heterodimer with protein S19. Forms two bridges to the 50S subunit in the 70S ribosome.

Its function is as follows. Located at the top of the head of the 30S subunit, it contacts several helices of the 16S rRNA. In the 70S ribosome it contacts the 23S rRNA (bridge B1a) and protein L5 of the 50S subunit (bridge B1b), connecting the 2 subunits; these bridges are implicated in subunit movement. Contacts the tRNAs in the A and P-sites. This Opitutus terrae (strain DSM 11246 / JCM 15787 / PB90-1) protein is Small ribosomal subunit protein uS13.